We begin with the raw amino-acid sequence, 52 residues long: Repressor-like protein SSo7c3 (52 aa).

The region spanning 4–51 (EEVVKVSRNYQVTIPAKVRQKFPVKEGDLVKVIYDENGGVVKIQILDS) is the SpoVT-AbrB domain.

The protein is Repressor-like protein SSo7c3 of Saccharolobus solfataricus (strain ATCC 35092 / DSM 1617 / JCM 11322 / P2) (Sulfolobus solfataricus).